Consider the following 464-residue polypeptide: Siroheme synthase (464 aa).

The segment at 1–203 (MEFLPLFHNL…GQGAEAERLL (203 aa)) is precorrin-2 dehydrogenase /sirohydrochlorin ferrochelatase. Residues 22–23 (EI) and 43–44 (PE) each bind NAD(+). Ser128 is subject to Phosphoserine. A uroporphyrinogen-III C-methyltransferase region spans residues 216–464 (GEVYLVGAGP…AWFEGAQATL (249 aa)). S-adenosyl-L-methionine is bound at residue Pro225. Asp248 acts as the Proton acceptor in catalysis. Catalysis depends on Lys270, which acts as the Proton donor. S-adenosyl-L-methionine-binding positions include 301–303 (GGD), Ile306, 331–332 (TA), Met383, and Gly412.

This sequence in the N-terminal section; belongs to the precorrin-2 dehydrogenase / sirohydrochlorin ferrochelatase family. The protein in the C-terminal section; belongs to the precorrin methyltransferase family.

The enzyme catalyses uroporphyrinogen III + 2 S-adenosyl-L-methionine = precorrin-2 + 2 S-adenosyl-L-homocysteine + H(+). It carries out the reaction precorrin-2 + NAD(+) = sirohydrochlorin + NADH + 2 H(+). It catalyses the reaction siroheme + 2 H(+) = sirohydrochlorin + Fe(2+). It participates in cofactor biosynthesis; adenosylcobalamin biosynthesis; precorrin-2 from uroporphyrinogen III: step 1/1. It functions in the pathway cofactor biosynthesis; adenosylcobalamin biosynthesis; sirohydrochlorin from precorrin-2: step 1/1. Its pathway is porphyrin-containing compound metabolism; siroheme biosynthesis; precorrin-2 from uroporphyrinogen III: step 1/1. The protein operates within porphyrin-containing compound metabolism; siroheme biosynthesis; siroheme from sirohydrochlorin: step 1/1. It participates in porphyrin-containing compound metabolism; siroheme biosynthesis; sirohydrochlorin from precorrin-2: step 1/1. Functionally, multifunctional enzyme that catalyzes the SAM-dependent methylations of uroporphyrinogen III at position C-2 and C-7 to form precorrin-2 via precorrin-1. Then it catalyzes the NAD-dependent ring dehydrogenation of precorrin-2 to yield sirohydrochlorin. Finally, it catalyzes the ferrochelation of sirohydrochlorin to yield siroheme. This Pseudomonas syringae pv. tomato (strain ATCC BAA-871 / DC3000) protein is Siroheme synthase.